The sequence spans 147 residues: Histidine-containing phosphotransfer protein 1 (147 aa).

An HPt domain is found at 38 to 133 (APDFVSEVVT…YDLRNKFQAM (96 aa)). Residue H79 is modified to Phosphohistidine.

Post-translationally, two-component system major event consists of a His-to-Asp phosphorelay between a sensor histidine kinase (HK) and a response regulator (RR). In plants, the His-to-Asp phosphorelay involves an additional intermediate named Histidine-containing phosphotransfer protein (HPt). This multistep phosphorelay consists of a His-Asp-His-Asp sequential transfer of a phosphate group between first a His and an Asp of the HK protein, followed by the transfer to a conserved His of the HPt protein and finally the transfer to an Asp in the receiver domain of the RR protein. As to expression, widely expressed.

Its subcellular location is the cytoplasm. The protein resides in the cytosol. The protein localises to the nucleus. In terms of biological role, functions as a two-component phosphorelay mediators between cytokinin sensor histidine kinases and response regulators (B-type ARRs). Plays an important role in propagating cytokinin signal transduction through the multistep His-to-Asp phosphorelay. Functions as a positive regulator of the cytokinin signaling pathway. May play a regulatory role in salt and drought tolerance during plant development. The chain is Histidine-containing phosphotransfer protein 1 from Oryza sativa subsp. japonica (Rice).